The primary structure comprises 1364 residues: Toxin subunit YenA2 (1364 aa).

A coiled-coil region spans residues 1025–1080 (SESYRRRRQEWELQYKQAEWEVNSVEQQINLQNMQIKAANKRLEQVEAQQQQAMAL).

In terms of assembly, semipurified toxin complex consists of at least YenA1-YenA2-YenB-YenC1-YenC2-Chi1-Chi2. The Yen-TC:K9 subcomplex is about 26 nm tall and 22 nm in diameter with 5-fold symmetry and 5 copies of YenA1, YenA2, Chi1 and Chi2; the chitinase subunits may be solvent accessible on the exterior the complex. The Yen-TC:K9 subcomplex has no insecticidal activity. The native complex with additional YenB, YenC1 and YenC2 subunits is 16 nm taller and is insecticidal; the toxicity-conferring subunits are present at about 1 copy each. The isolated toxin complex includes 3 peptides starting between residues 768 and 778 of this protein, which might be physiologically relevant.

The protein resides in the secreted. Part of an orally active toxin complex (TC) with strong insecticidal effects on larvae of the Coleoptera Costelytra zealandica, Acrossidius tasmania and Adoryphorus couloni and some Lepidoptera larvae. The TC has an endochitinase activity. This chain is Toxin subunit YenA2, found in Yersinia entomophaga.